The primary structure comprises 918 residues: Nitrate reductase [NADH] (918 aa).

The tract at residues lysine 25–serine 44 is disordered. Cysteine 195 provides a ligand contact to Mo-molybdopterin. One can recognise a Cytochrome b5 heme-binding domain in the interval serine 543 to isoleucine 618. Residues histidine 578 and histidine 601 each coordinate heme. The FAD-binding FR-type domain maps to asparagine 661–threonine 774. FAD contacts are provided by residues arginine 714–threonine 717, valine 731–tyrosine 735, phenylalanine 736, phenylalanine 743, isoleucine 748–serine 750, and threonine 801.

It belongs to the nitrate reductase family. As to quaternary structure, homodimer. FAD serves as cofactor. It depends on heme as a cofactor. The cofactor is Mo-molybdopterin.

It catalyses the reaction nitrite + NAD(+) + H2O = nitrate + NADH + H(+). In terms of biological role, nitrate reductase is a key enzyme involved in the first step of nitrate assimilation in plants, fungi and bacteria. The sequence is that of Nitrate reductase [NADH] from Cucurbita maxima (Pumpkin).